A 137-amino-acid chain; its full sequence is Glutamate mutase sigma subunit (137 aa).

The 135-residue stretch at 3-137 folds into the B12-binding domain; sequence KKTIVLGVIG…ADMKEVLGVE (135 aa). Adenosylcob(III)alamin contacts are provided by residues 13–17, His16, 61–63, and 93–97; these read SDCHA, SSL, and NIVVG.

The protein belongs to the methylaspartate mutase GlmS subunit family. Heterotetramer composed of 2 epsilon subunits (GlmE) and 2 sigma subunits (GlmS). GlmE exists as a homodimer and GlmS as a monomer. Adenosylcob(III)alamin is required as a cofactor.

It catalyses the reaction (2S,3S)-3-methyl-L-aspartate = L-glutamate. It functions in the pathway amino-acid degradation; L-glutamate degradation via mesaconate pathway; acetate and pyruvate from L-glutamate: step 1/4. Functionally, catalyzes the carbon skeleton rearrangement of L-glutamate to L-threo-3-methylaspartate ((2S,3S)-3-methylaspartate). The chain is Glutamate mutase sigma subunit from Clostridium tetanomorphum.